Consider the following 393-residue polypeptide: Staphopain B (393 aa).

Positions 1-36 (MNSSCKTRVFNIISIIMVSMLILSLGAFANNNKAKA) are cleaved as a signal peptide. The propeptide occupies 37-219 (DSHSKQLEIN…KVEENEAIQE (183 aa)). Residues C243, H340, and N360 contribute to the active site.

It belongs to the peptidase C47 family. As to quaternary structure, in the cytoplasm, prematurely activated/folded SspB forms a stable non-covalent complex with SspC. Post-translationally, proteolytically cleaved by staphylococcal serine protease (SspA).

It is found in the secreted. Its activity is regulated as follows. Prematurely activated/folded staphopain B is inhibited by staphostatin B (SspC), which is probably required to protect staphylococcal cytoplasmic proteins from degradation by SspB. Cysteine protease that plays an important role in the inhibition of host innate immune response. Degrades host elastin, fibrogen, fibronectin and kininogen. Blocks phagocytosis of opsonised S.aureus by neutrophils and monocytes by inducing their death in a proteolytic activity-dependent manner. Decreases surface expression of the 'don't eat me' signal CD31 on neutrophils. Cleaves host galectin-3/LGALS3, thereby inhibiting the neutrophil-activating ability of the lectin. This chain is Staphopain B (sspB), found in Staphylococcus aureus (strain MRSA252).